Here is a 150-residue protein sequence, read N- to C-terminus: D-aminoacyl-tRNA deacylase (150 aa).

Residues 138–139 carry the Gly-cisPro motif, important for rejection of L-amino acids motif; it reads GP.

It belongs to the DTD family. In terms of assembly, homodimer.

It localises to the cytoplasm. It catalyses the reaction glycyl-tRNA(Ala) + H2O = tRNA(Ala) + glycine + H(+). It carries out the reaction a D-aminoacyl-tRNA + H2O = a tRNA + a D-alpha-amino acid + H(+). In terms of biological role, an aminoacyl-tRNA editing enzyme that deacylates mischarged D-aminoacyl-tRNAs. Also deacylates mischarged glycyl-tRNA(Ala), protecting cells against glycine mischarging by AlaRS. Acts via tRNA-based rather than protein-based catalysis; rejects L-amino acids rather than detecting D-amino acids in the active site. By recycling D-aminoacyl-tRNA to D-amino acids and free tRNA molecules, this enzyme counteracts the toxicity associated with the formation of D-aminoacyl-tRNA entities in vivo and helps enforce protein L-homochirality. This chain is D-aminoacyl-tRNA deacylase, found in Bacteroides thetaiotaomicron (strain ATCC 29148 / DSM 2079 / JCM 5827 / CCUG 10774 / NCTC 10582 / VPI-5482 / E50).